The sequence spans 269 residues: 15-hydroxyprostaglandin dehydrogenase [NAD(+)] (269 aa).

NAD(+)-binding positions include 12-20, 36-37, 63-65, and N91; these read GAAQGIGKA, DW, and CDV. Residues S138 and Q148 each contribute to the substrate site. Y151 serves as the catalytic Proton acceptor. NAD(+) contacts are provided by residues 151–155 and 186–188; these read YCASK and VDT.

This sequence belongs to the short-chain dehydrogenases/reductases (SDR) family. In terms of assembly, homodimer. Expressed in proximal convoluted tubules of the kidney, where it colocalizes with the prostaglandin transporter SLC22A22 (at protein level). Expressed in lung, intestine, stomach and liver.

It localises to the cytoplasm. It catalyses the reaction prostaglandin E2 + NAD(+) = 15-oxoprostaglandin E2 + NADH + H(+). It carries out the reaction (15S)-hydroxy-(5Z,8Z,11Z,13E)-eicosatetraenoate + NAD(+) = 15-oxo-(5Z,8Z,11Z,13E)-eicosatetraenoate + NADH + H(+). The enzyme catalyses (11R)-hydroxy-(5Z,8Z,12E,14Z)-eicosatetraenoate + NAD(+) = 11-oxo-(5Z,8Z,12E,14Z)-eicosatetraenoate + NADH + H(+). The catalysed reaction is lipoxin A4 + NAD(+) = 15-oxo-(5S,6R)-dihydroxy-(7E,9E,11Z,13E)-eicosatetraenoate + NADH + H(+). It catalyses the reaction 15-oxo-(5S,6R)-dihydroxy-(7E,9E,11Z)-eicosatrienoate + NADH + H(+) = (5S,6R,15S)-trihydroxy-(7E,9E,11Z)-eicosatrienoate + NAD(+). It carries out the reaction prostaglandin A1 + NAD(+) = 15-oxo-prostaglandin A1 + NADH + H(+). The enzyme catalyses prostaglandin E1 + NAD(+) = 15-oxoprostaglandin E1 + NADH + H(+). The catalysed reaction is 14-hydroxy-(4Z,7Z,10Z,12E,16Z,19Z)-docosahexaenoate + NAD(+) = 14-oxo-(4Z,7Z,10Z,12E,16Z,19Z)-docosahexaenoate + NADH + H(+). It catalyses the reaction resolvin E1 + NAD(+) = 18-oxo-resolvin E1 + NADH + H(+). It carries out the reaction resolvin D1 + NAD(+) = 8-oxoresolvin D1 + NADH + H(+). The enzyme catalyses resolvin D1 + NAD(+) = 17-oxoresolvin D1 + NADH + H(+). The catalysed reaction is resolvin D2 + NAD(+) = 7-oxoresolvin D2 + NADH + H(+). It catalyses the reaction resolvin D2 + NAD(+) = 16-oxoresolvin D2 + NADH + H(+). Its function is as follows. Catalyzes the NAD-dependent dehydrogenation (oxidation) of a broad array of hydroxylated polyunsaturated fatty acids (mainly eicosanoids and docosanoids, including prostaglandins, lipoxins and resolvins), yielding their corresponding keto (oxo) metabolites. Decreases the levels of the pro-proliferative prostaglandins such as prostaglandin E2 (whose activity is increased in cancer because of an increase in the expression of cyclooxygenase 2) and generates oxo-fatty acid products that can profoundly influence cell function by abrogating pro-inflammatory cytokine expression. Converts resolvins E1, D1 and D2 to their oxo products, which represents a mode of resolvin inactivation. Resolvin E1 plays important roles during the resolution phase of acute inflammation, while resolvins D1 and D2 have a unique role in obesity-induced adipose inflammation. This Mus musculus (Mouse) protein is 15-hydroxyprostaglandin dehydrogenase [NAD(+)] (Hpgd).